The following is a 427-amino-acid chain: Trigger factor (427 aa).

Residues 163-248 enclose the PPIase FKBP-type domain; that stretch reads GDTVVIDFVG…VNEVKAKELP (86 aa).

Belongs to the FKBP-type PPIase family. Tig subfamily.

It localises to the cytoplasm. The catalysed reaction is [protein]-peptidylproline (omega=180) = [protein]-peptidylproline (omega=0). Its function is as follows. Involved in protein export. Acts as a chaperone by maintaining the newly synthesized protein in an open conformation. Functions as a peptidyl-prolyl cis-trans isomerase. The protein is Trigger factor (tig) of Lactococcus lactis subsp. lactis (strain IL1403) (Streptococcus lactis).